A 574-amino-acid polypeptide reads, in one-letter code: 2-succinyl-5-enolpyruvyl-6-hydroxy-3-cyclohexene-1-carboxylate synthase (574 aa).

It belongs to the TPP enzyme family. MenD subfamily. Homodimer. Mg(2+) serves as cofactor. Requires Mn(2+) as cofactor. The cofactor is thiamine diphosphate.

It carries out the reaction isochorismate + 2-oxoglutarate + H(+) = 5-enolpyruvoyl-6-hydroxy-2-succinyl-cyclohex-3-ene-1-carboxylate + CO2. It functions in the pathway quinol/quinone metabolism; 1,4-dihydroxy-2-naphthoate biosynthesis; 1,4-dihydroxy-2-naphthoate from chorismate: step 2/7. The protein operates within cofactor biosynthesis; phylloquinone biosynthesis. In terms of biological role, catalyzes the thiamine diphosphate-dependent decarboxylation of 2-oxoglutarate and the subsequent addition of the resulting succinic semialdehyde-thiamine pyrophosphate anion to isochorismate to yield 2-succinyl-5-enolpyruvyl-6-hydroxy-3-cyclohexene-1-carboxylate (SEPHCHC). The chain is 2-succinyl-5-enolpyruvyl-6-hydroxy-3-cyclohexene-1-carboxylate synthase from Synechococcus sp. (strain RCC307).